The chain runs to 1071 residues: DNA-directed RNA polymerase subunit beta (1071 aa).

This sequence belongs to the RNA polymerase beta chain family. As to quaternary structure, in plastids the minimal PEP RNA polymerase catalytic core is composed of four subunits: alpha, beta, beta', and beta''. When a (nuclear-encoded) sigma factor is associated with the core the holoenzyme is formed, which can initiate transcription.

It localises to the plastid. The protein localises to the chloroplast. It carries out the reaction RNA(n) + a ribonucleoside 5'-triphosphate = RNA(n+1) + diphosphate. Functionally, DNA-dependent RNA polymerase catalyzes the transcription of DNA into RNA using the four ribonucleoside triphosphates as substrates. This chain is DNA-directed RNA polymerase subunit beta, found in Acorus gramineus (Dwarf sweet flag).